Consider the following 362-residue polypeptide: 3-dehydroquinate synthase (362 aa).

NAD(+) is bound by residues 71-76 (DGEQYK), 105-109 (GVVGD), 129-130 (TT), Lys142, Lys151, and 169-172 (CLKT). Positions 184, 248, and 265 each coordinate Zn(2+).

The protein belongs to the sugar phosphate cyclases superfamily. Dehydroquinate synthase family. Co(2+) serves as cofactor. Requires Zn(2+) as cofactor. NAD(+) is required as a cofactor.

The protein localises to the cytoplasm. The enzyme catalyses 7-phospho-2-dehydro-3-deoxy-D-arabino-heptonate = 3-dehydroquinate + phosphate. Its pathway is metabolic intermediate biosynthesis; chorismate biosynthesis; chorismate from D-erythrose 4-phosphate and phosphoenolpyruvate: step 2/7. Functionally, catalyzes the conversion of 3-deoxy-D-arabino-heptulosonate 7-phosphate (DAHP) to dehydroquinate (DHQ). This chain is 3-dehydroquinate synthase, found in Yersinia pseudotuberculosis serotype O:1b (strain IP 31758).